Consider the following 437-residue polypeptide: Sulfite reductase, dissimilatory-type subunit alpha (437 aa).

The [4Fe-4S] cluster site is built by Cys-177, Cys-183, Cys-221, Cys-225, Cys-284, Cys-303, Cys-306, and Cys-309. The 4Fe-4S ferredoxin-type domain maps to Ser-294–Glu-322.

In terms of assembly, heterohexamer of two alpha, two beta and two gamma subunits.

Functionally, part of the complex that catalyzes the reduction of sulfite to sulfide. The alpha and beta subunits may have arisen by gene duplication. They both bind 2 iron-sulfur clusters, but the alpha subunit seems to be catalytically inactive, due to substitutions along the putative substrate access channel, and because it binds sirohydrochlorin (the dematallated form of siroheme) instead of siroheme. This chain is Sulfite reductase, dissimilatory-type subunit alpha (dsvA), found in Nitratidesulfovibrio vulgaris (strain ATCC 29579 / DSM 644 / CCUG 34227 / NCIMB 8303 / VKM B-1760 / Hildenborough) (Desulfovibrio vulgaris).